A 500-amino-acid polypeptide reads, in one-letter code: NAD(P)H-quinone oxidoreductase chain 4, chloroplastic (500 aa).

The next 12 membrane-spanning stretches (helical) occupy residues 4-24 (FPWL…ILFI), 37-57 (ICIC…NFQL), 80-100 (LGID…TTLA), 134-154 (LLLF…LLSM), 167-187 (FILY…GMGL), 208-228 (GLEI…PPII), 242-262 (HYST…YGLV), 272-292 (AHSL…IYAA), 330-350 (GAIL…FLAG), 386-406 (LASP…GIIT), 416-436 (ILIT…LLSM), and 462-482 (IFIL…PDFV).

It belongs to the complex I subunit 4 family.

It is found in the plastid. The protein resides in the chloroplast thylakoid membrane. The catalysed reaction is a plastoquinone + NADH + (n+1) H(+)(in) = a plastoquinol + NAD(+) + n H(+)(out). It carries out the reaction a plastoquinone + NADPH + (n+1) H(+)(in) = a plastoquinol + NADP(+) + n H(+)(out). The chain is NAD(P)H-quinone oxidoreductase chain 4, chloroplastic from Amborella trichopoda.